The chain runs to 479 residues: MPPKGKKGKKGKKLPVLIDGVDTSAMTRDQLEAFALRLKAEMDREREERNYFQLERDKIRTFWEITRQQLDETRYELQQKDKEIEATQDLADIDTKHVMQQMKHLQFENHNRLGEVRAEAMTQLKLAQEHHVLQENELQRDKRQLRRMLRERMEMSEMQLRQMEAHFNEKLLEQRITFERERKDNEMLHEEKMIEQKAKLDLFYGTQMFEVEERKNQQIKDLQDHHDLAFNDMKNYYNDITLNNLALIGSMKEQLEHLRKQAERSDRIAADTAAENRRLKEPLEHANIQLNEYRRKLEFYERDKQQLSRLKTRNTRLEKKVKGLTWEAETLILRNDSLVAEREGLKERFNDVIVELQQKTGLKNVLLERKIAALMREDEKRSIVLHETIATCAPNFAEKLTSLDERVGNIIDEKNKIILDLRYEVTKARKAHDDLLETYECKLKQYGVPTDELGFKPIRNRDQQQLYVCGPAGIITENK.

Coiled coils occupy residues 28–93 (RDQL…LADI), 117–170 (RAEA…FNEK), and 210–347 (EVEE…GLKE).

Belongs to the DRC4 family.

It is found in the cytoplasm. The protein localises to the cytoskeleton. It localises to the flagellum basal body. In terms of biological role, cytoskeletal linker which probably functions in axonemal and non-axonemal dynein regulation. May play a role in the spermatozoa motility. In Drosophila melanogaster (Fruit fly), this protein is Dynein regulatory complex subunit 4.